Consider the following 215-residue polypeptide: Large ribosomal subunit protein uL4 (215 aa).

The disordered stretch occupies residues 46–76 (TAKSKNRAEVSGGGRKPWAQKGGGRARAGSI). The segment covering 56–71 (SGGGRKPWAQKGGGRA) has biased composition (gly residues).

It belongs to the universal ribosomal protein uL4 family. As to quaternary structure, part of the 50S ribosomal subunit.

In terms of biological role, one of the primary rRNA binding proteins, this protein initially binds near the 5'-end of the 23S rRNA. It is important during the early stages of 50S assembly. It makes multiple contacts with different domains of the 23S rRNA in the assembled 50S subunit and ribosome. Its function is as follows. Forms part of the polypeptide exit tunnel. The chain is Large ribosomal subunit protein uL4 from Helicobacter pylori (strain HPAG1).